The sequence spans 48 residues: Histone H4 (48 aa).

Residues Met-1–Lys-14 are compositionally biased toward gly residues. The disordered stretch occupies residues Met-1–Arg-23.

Belongs to the histone H4 family. The nucleosome is a histone octamer containing two molecules each of H2A, H2B, H3 and H4 assembled in one H3-H4 heterotetramer and two H2A-H2B heterodimers. The octamer wraps approximately 147 bp of DNA.

The protein localises to the nucleus. The protein resides in the chromosome. In terms of biological role, core component of nucleosome. Nucleosomes wrap and compact DNA into chromatin, limiting DNA accessibility to the cellular machineries which require DNA as a template. Histones thereby play a central role in transcription regulation, DNA repair, DNA replication and chromosomal stability. DNA accessibility is regulated via a complex set of post-translational modifications of histones, also called histone code, and nucleosome remodeling. This chain is Histone H4, found in Blepharisma japonicum.